The following is a 247-amino-acid chain: TLC domain-containing protein 1 (247 aa).

The signal sequence occupies residues 1–27 (MPLLLHPAWPLLLGATLTFRALRRVLC). The Extracellular portion of the chain corresponds to 28–46 (RLPLPAHVQTDPLRTWRWH). Positions 40–234 (LRTWRWHNLL…LLRSDFCPER (195 aa)) constitute a TLC domain. The helical transmembrane segment at 47-67 (NLLVSFTHSIVSGIWALLCIW) threads the bilayer. The Cytoplasmic portion of the chain corresponds to 68-83 (QTPEMLVEIETAWSVC). A helical transmembrane segment spans residues 84–104 (GYLLVCFSAGYFIHDTVDIVV). Residues 105 to 123 (SRQTRASWEYLVHHVMAMG) lie on the Extracellular side of the membrane. The segment at residues 124-144 (AFFSGIFWKRFVGGGVLTLLV) is an intramembrane region (helical). The Extracellular segment spans residues 145–173 (EVSNIFLTLRMMMKINNAQDILLYKVNKY). Residues 174-194 (VNLVMYFLFRLAPQAYLTKFF) form a helical membrane-spanning segment. Residues 195–201 (LQYAGQR) lie on the Cytoplasmic side of the membrane. A helical membrane pass occupies residues 202-222 (TLGTFLLSILLMLDVMILIYF). The Extracellular portion of the chain corresponds to 223–247 (SRLLRSDFCPERAPSRQQKDKFLTE).

It is found in the cell membrane. Its function is as follows. Regulates the composition and fluidity of the plasma membrane. Inhibits the incorporation of membrane-fluidizing phospholipids containing omega-3 long-chain polyunsaturated fatty acids (LCPUFA) and thereby promotes membrane rigidity. Does not appear to have any effect on LCPUFA synthesis. In Rattus norvegicus (Rat), this protein is TLC domain-containing protein 1 (Tlcd1).